Consider the following 273-residue polypeptide: 2-dehydro-3-deoxyphosphooctonate aldolase (273 aa).

The protein belongs to the KdsA family.

The protein localises to the cytoplasm. The catalysed reaction is D-arabinose 5-phosphate + phosphoenolpyruvate + H2O = 3-deoxy-alpha-D-manno-2-octulosonate-8-phosphate + phosphate. Its pathway is carbohydrate biosynthesis; 3-deoxy-D-manno-octulosonate biosynthesis; 3-deoxy-D-manno-octulosonate from D-ribulose 5-phosphate: step 2/3. It functions in the pathway bacterial outer membrane biogenesis; lipopolysaccharide biosynthesis. This chain is 2-dehydro-3-deoxyphosphooctonate aldolase, found in Nitratidesulfovibrio vulgaris (strain ATCC 29579 / DSM 644 / CCUG 34227 / NCIMB 8303 / VKM B-1760 / Hildenborough) (Desulfovibrio vulgaris).